Consider the following 112-residue polypeptide: Nucleoid-associated protein FTH_1374 (112 aa).

Residues 1-27 are disordered; the sequence is MNFDMSKLMQQAQKMQEQMKKAQQERE. The segment covering 17–27 has biased composition (basic and acidic residues); that stretch reads EQMKKAQQERE.

The protein belongs to the YbaB/EbfC family. As to quaternary structure, homodimer.

The protein resides in the cytoplasm. It localises to the nucleoid. Its function is as follows. Binds to DNA and alters its conformation. May be involved in regulation of gene expression, nucleoid organization and DNA protection. This is Nucleoid-associated protein FTH_1374 from Francisella tularensis subsp. holarctica (strain OSU18).